The sequence spans 205 residues: Probable DNA-binding protein (205 aa).

The segment at 140–168 (GEGDGAPRPACPDFSTRGAETGNQGVQPG) is disordered.

The polypeptide is Probable DNA-binding protein (Homo sapiens (Human)).